A 185-amino-acid chain; its full sequence is Elongation factor P (185 aa).

Belongs to the elongation factor P family.

It is found in the cytoplasm. Its pathway is protein biosynthesis; polypeptide chain elongation. Its function is as follows. Involved in peptide bond synthesis. Stimulates efficient translation and peptide-bond synthesis on native or reconstituted 70S ribosomes in vitro. Probably functions indirectly by altering the affinity of the ribosome for aminoacyl-tRNA, thus increasing their reactivity as acceptors for peptidyl transferase. The chain is Elongation factor P from Burkholderia lata (strain ATCC 17760 / DSM 23089 / LMG 22485 / NCIMB 9086 / R18194 / 383).